The following is a 305-amino-acid chain: Peroxisome assembly protein 26 (305 aa).

Residues 1–246 lie on the Cytoplasmic side of the membrane; sequence MKSDASTSAA…RRLWGSVVSH (246 aa). Residues 247–267 form a helical; Signal-anchor for type II membrane protein membrane-spanning segment; sequence LLSQPFRKGLLAALILCLLIL. The Peroxisomal matrix portion of the chain corresponds to 268 to 305; that stretch reads RFDPAAPSSLPFLYQLTQLFRRIQKATLSRLYPLALRD.

Belongs to the peroxin-26 family. In terms of assembly, interacts (via its cytoplasmic domain) with PEX6; interaction is direct and is ATP-dependent. Interacts with PEX1; interaction is indirect and is mediated via interaction with PEX6.

Its subcellular location is the peroxisome membrane. Functionally, peroxisomal docking factor that anchors PEX1 and PEX6 to peroxisome membranes. PEX26 is therefore required for the formation of the PEX1-PEX6 AAA ATPase complex, a complex that mediates the extraction of the PEX5 receptor from peroxisomal membrane. The polypeptide is Peroxisome assembly protein 26 (Mus musculus (Mouse)).